The sequence spans 252 residues: Aspartate/glutamate leucyltransferase (252 aa).

The protein belongs to the R-transferase family. Bpt subfamily.

The protein resides in the cytoplasm. The enzyme catalyses N-terminal L-glutamyl-[protein] + L-leucyl-tRNA(Leu) = N-terminal L-leucyl-L-glutamyl-[protein] + tRNA(Leu) + H(+). The catalysed reaction is N-terminal L-aspartyl-[protein] + L-leucyl-tRNA(Leu) = N-terminal L-leucyl-L-aspartyl-[protein] + tRNA(Leu) + H(+). In terms of biological role, functions in the N-end rule pathway of protein degradation where it conjugates Leu from its aminoacyl-tRNA to the N-termini of proteins containing an N-terminal aspartate or glutamate. The sequence is that of Aspartate/glutamate leucyltransferase from Afipia carboxidovorans (strain ATCC 49405 / DSM 1227 / KCTC 32145 / OM5) (Oligotropha carboxidovorans).